The primary structure comprises 197 residues: Xanthine phosphoribosyltransferase (197 aa).

2 residues coordinate xanthine: leucine 20 and asparagine 27. 128-132 (ANGQA) is a 5-phospho-alpha-D-ribose 1-diphosphate binding site. Lysine 156 serves as a coordination point for xanthine.

This sequence belongs to the purine/pyrimidine phosphoribosyltransferase family. Xpt subfamily. As to quaternary structure, homodimer.

It is found in the cytoplasm. The enzyme catalyses XMP + diphosphate = xanthine + 5-phospho-alpha-D-ribose 1-diphosphate. The protein operates within purine metabolism; XMP biosynthesis via salvage pathway; XMP from xanthine: step 1/1. Converts the preformed base xanthine, a product of nucleic acid breakdown, to xanthosine 5'-monophosphate (XMP), so it can be reused for RNA or DNA synthesis. The sequence is that of Xanthine phosphoribosyltransferase from Bacillus thuringiensis (strain Al Hakam).